The following is a 480-amino-acid chain: MRHDALFERVSARLKAQVGPDVFASWFGRLKLHSVSKSVVRLSVPTTFLKSWINNRYLDLITTLVQQEDSEILKVEILVRTATRGHRPTAPEESVAAAAEAAVVPPSRRSAAPTVAIAAAAVAAAPARPVQAPLFGSPLDQRYGFDSFVEGSSNRVALAAARTIAEAGAGAVRFNPLFIHSSVGLGKTHLLQAIALAALQSARAPRVVYLTAEYFMWRFATAIRDNDALSLKESLRNIDLLIIDDMQFLQGKSIQHEFCHLLNMLLDSAKQVVVAADRAPWELESLDSRVRSRLQGGVAIEMEGPDYEMRLEMLKRRLEAARQDDASLEIPLEILSHVARNVTASGRELEGAFNQLLFRRSFEPQLSIERVDELLGHLVNAGEPRRVRIEDIQRVVAKHYNVSRQELVSNRRTRVIVKPRQIAMYLSKTLTPRSFPEIGRRFGGRDHTTVLHAVRKIEELISADTKLSHEIELLKRLINE.

Positions Met-1 to Glu-71 are domain I, interacts with DnaA modulators. Positions Glu-71–Ser-137 are domain II. Residues Pro-138–Arg-360 form a domain III, AAA+ region region. ATP is bound by residues Gly-184, Gly-186, Lys-187, and Thr-188. Positions Ser-361–Glu-480 are domain IV, binds dsDNA.

It belongs to the DnaA family. As to quaternary structure, oligomerizes as a right-handed, spiral filament on DNA at oriC.

Its subcellular location is the cytoplasm. Its function is as follows. Plays an essential role in the initiation and regulation of chromosomal replication. ATP-DnaA binds to the origin of replication (oriC) to initiate formation of the DNA replication initiation complex once per cell cycle. Binds the DnaA box (a 9 base pair repeat at the origin) and separates the double-stranded (ds)DNA. Forms a right-handed helical filament on oriC DNA; dsDNA binds to the exterior of the filament while single-stranded (ss)DNA is stabiized in the filament's interior. The ATP-DnaA-oriC complex binds and stabilizes one strand of the AT-rich DNA unwinding element (DUE), permitting loading of DNA polymerase. After initiation quickly degrades to an ADP-DnaA complex that is not apt for DNA replication. Binds acidic phospholipids. The protein is Chromosomal replication initiator protein DnaA of Rhizobium meliloti (strain 1021) (Ensifer meliloti).